The chain runs to 92 residues: Acyl-CoA-binding domain-containing protein 6 (92 aa).

Residues 3–88 (LKEEFEEHAE…VKQLLEVAAS (86 aa)) enclose the ACB domain. An acyl-CoA-binding positions include 30-34 (YGLYK), Lys52, Lys56, and Tyr75.

The protein belongs to the ACBP family. As to quaternary structure, interacts with PDLP8. Mostly expressed in seeds, stems, and siliques, and, to a lower extent, in leaves, flowers, and roots (at protein level). Highly expressed in root and shoot phloem companion cells.

Its subcellular location is the cytoplasm. The protein localises to the cell membrane. Its function is as follows. Binds medium- and long-chain acyl-CoA esters with very high affinity. May function as an intracellular carrier of acyl-CoA esters. Confers resistance to cold and freezing. Interacts with phosphatidylcholine and derivatives, but not phosphatidic acid and lysophosphatidylcholine. May be involved in phospholipid metabolism. The protein is Acyl-CoA-binding domain-containing protein 6 (ACBP6) of Arabidopsis thaliana (Mouse-ear cress).